The primary structure comprises 289 residues: Ketose 3-epimerase (289 aa).

Glutamate 146 serves as the catalytic Proton donor/acceptor. Glutamate 146 serves as a coordination point for Mn(2+). Residues glutamate 152 and 179–182 (DTYH) contribute to the substrate site. Positions 179 and 205 each coordinate Mn(2+). A substrate-binding site is contributed by arginine 211. Glutamate 240 serves as the catalytic Proton donor/acceptor. Glutamate 240 provides a ligand contact to Mn(2+).

This sequence belongs to the hyi family. In terms of assembly, homotetramer. It depends on Mg(2+) as a cofactor. Requires Mn(2+) as cofactor. Co(2+) is required as a cofactor.

It carries out the reaction L-ribulose = L-xylulose. The catalysed reaction is D-allulose = keto-D-fructose. It catalyses the reaction keto-L-tagatose = keto-L-sorbose. The enzyme catalyses D-ribulose = D-xylulose. It carries out the reaction L-allulose = keto-L-fructose. The catalysed reaction is keto-D-tagatose = keto-D-sorbose. Its function is as follows. Catalyzes the reversible C-3 epimerization of several ketoses. Shows the highest enzymatic activity for the epimerization of L-ribulose to L-xylulose. Is also able to convert D-allulose (also known as D-psicose) to D-fructose and, to a lesser extent, L-tagatose to L-sorbose, D-ribulose to D-xylulose, L-allulose to L-fructose and D-tagatose to D-sorbose. This is Ketose 3-epimerase from Arthrobacter globiformis.